Reading from the N-terminus, the 168-residue chain is Secreted RxLR effector protein RXLR-C06 (168 aa).

The N-terminal stretch at 1 to 22 (MRIQLLWLSFAVLSTILSTCDA) is a signal peptide. Positions 25-52 (DKLDPQRVQPNQNGSGHNQSIRSALKTS) are disordered. Over residues 32 to 50 (VQPNQNGSGHNQSIRSALK) the composition is skewed to polar residues. N37 and N42 each carry an N-linked (GlcNAc...) asparagine glycan. Positions 46–63 (RSALKTSHGKTIADDEER) match the RxLR-dEER motif. The IQ domain maps to 78–107 (YKAIVAKLSKYFRDYHERREIRKQRILNKS). N-linked (GlcNAc...) asparagine glycosylation is present at N105.

Belongs to the RxLR effector family.

The protein resides in the secreted. It is found in the host Golgi apparatus. Functionally, secreted effector that suppresses pattern-triggered immunity (PTI) in plant host. This chain is Secreted RxLR effector protein RXLR-C06, found in Plasmopara halstedii (Downy mildew of sunflower).